The primary structure comprises 472 residues: Eukaryotic translation initiation factor 2 subunit 3, Y-linked (472 aa).

The residue at position 2 (A2) is an N-acetylalanine. S16 carries the post-translational modification Phosphoserine. A tr-type G domain is found at Q39–L247. Residues G48–S55 form a G1 region. Residue A51–T56 coordinates GTP. A G2 region spans residues N76–K80. The segment at D134–G137 is G3. GTP contacts are provided by residues N190–D193 and S225–Q227. A G4 region spans residues N190–D193. The tract at residues S225 to Q227 is G5.

Belongs to the TRAFAC class translation factor GTPase superfamily. Classic translation factor GTPase family. EIF2G subfamily. In terms of assembly, eIF2 is a heterotrimer composed of an alpha (EIF2S1), a beta (EIF2S2) and a gamma (Eif2s3x and Eif2s3y) chain. eIF2 is member of the 43S pre-initiation complex (43S PIC). As to expression, widely expressed in males.

It catalyses the reaction GTP + H2O = GDP + phosphate + H(+). In terms of biological role, member of the eIF2 complex that functions in the early steps of protein synthesis by forming a ternary complex with GTP and initiator tRNA. This complex binds to a 40S ribosomal subunit, followed by mRNA binding to form the 43S pre-initiation complex (43S PIC). Junction of the 60S ribosomal subunit to form the 80S initiation complex is preceded by hydrolysis of the GTP bound to eIF2 and release of an eIF2-GDP binary complex. In order for eIF2 to recycle and catalyze another round of initiation, the GDP bound to eIF2 must exchange with GTP by way of a reaction catalyzed by eIF-2B. Along with its paralog on chromosome X, may contribute to spermatogenesis up to the round spermatid stage. The polypeptide is Eukaryotic translation initiation factor 2 subunit 3, Y-linked (Eif2s3y) (Rattus norvegicus (Rat)).